The primary structure comprises 351 residues: Regulator of V-ATPase in vacuolar membrane protein 2 (351 aa).

Component of the RAVE complex composed of RAV1, RAV2 and CBF3D/SKP1. Within the complex, it interacts directly with RAV1 and CBF3D. Interacts with the V-ATPase V1 subunits VMA1, VMA2 and VMA8.

The protein localises to the cytoplasm. Its subcellular location is the early endosome membrane. In terms of biological role, component of the RAVE complex, which is required for stable assembly of the vacuolar ATPase complex V-ATPase under many conditions. May be required for transport between the early endosome and the late endosome/prevacuolar compartment (PVC). In Saccharomyces cerevisiae (strain ATCC 204508 / S288c) (Baker's yeast), this protein is Regulator of V-ATPase in vacuolar membrane protein 2 (RAV2).